The chain runs to 93 residues: MQAGGGGDAGDTRGRHRIQAELKKLEQEARFLEEELEELDKTDKVSAALQELMVTAESKADPLLPVTTGPACQSWDRWFEGPQDLRRCKCWFL.

A coiled-coil region spans residues 12-52; the sequence is TRGRHRIQAELKKLEQEARFLEEELEELDKTDKVSAALQEL. The region spanning 20 to 93 is the G protein gamma domain; that stretch reads AELKKLEQEA…DLRRCKCWFL (74 aa). C88 carries S-palmitoyl cysteine lipidation. A Cysteine methyl ester modification is found at C90. The S-farnesyl cysteine moiety is linked to residue C90. The propeptide at 91–93 is removed in mature form; that stretch reads WFL.

In terms of assembly, g proteins are composed of 3 units, alpha, beta and gamma. Interacts with the beta subunit RGB1.

The protein resides in the cell membrane. Functionally, guanine nucleotide-binding proteins (G proteins) are involved as modulators or transducers in various transmembrane signaling systems. The polypeptide is Guanine nucleotide-binding protein subunit gamma 1 (Oryza sativa subsp. indica (Rice)).